The chain runs to 579 residues: MRTTQYLLSTLKELPADAEIISHQLMLRAGMIRKLASGLYTWLPTGTRVLKKIENIVREEMNKAGAIEVVMPIVQPADLWQESERWEHYGPELLRFADRSERPFVLGPTHEEVITDLVRNEISSYKQLPLNFFQIQTKFRDEIRPRFGIMRAREFLMKDAYSFHNTLESLQETYQTMYQAYTKIFERMQLNFRAVQADTGSIGGSRSHEFQVLADSGEDEIVFSTVSDFAANIELAEALVPHEKRASPCETLRIIDTPNAKTIDQLVEQFSIPIEKTLKTLIVYAHKDSGHKLLALLVRGDHLINKVKAEKSPQVAKPLTFASEEDIRAHIGAGPGSLGPLHLKMPIIADRAVAVMSDFSAGSNKEDQHYFGINWERDLPLPIIEDLRNVVEGDPSPDGKGTLLIKRGIEVGHIFQLGTKYSQAMGAKVQGENGRQQMMIMGCYGIGVSRLVAAAIEQHHDQHGILWPEAIAPFQVAILPIHLKKSDAVRQEAERLYAELSSLGMDVIFDDRQERPGVMFADMELIGIPHTLIIGDRDLENNELEYRYRGIDDHKKQQLKISDVVSFLLEKINSHFNPK.

This sequence belongs to the class-II aminoacyl-tRNA synthetase family. ProS type 1 subfamily. In terms of assembly, homodimer.

The protein localises to the cytoplasm. It catalyses the reaction tRNA(Pro) + L-proline + ATP = L-prolyl-tRNA(Pro) + AMP + diphosphate. Catalyzes the attachment of proline to tRNA(Pro) in a two-step reaction: proline is first activated by ATP to form Pro-AMP and then transferred to the acceptor end of tRNA(Pro). As ProRS can inadvertently accommodate and process non-cognate amino acids such as alanine and cysteine, to avoid such errors it has two additional distinct editing activities against alanine. One activity is designated as 'pretransfer' editing and involves the tRNA(Pro)-independent hydrolysis of activated Ala-AMP. The other activity is designated 'posttransfer' editing and involves deacylation of mischarged Ala-tRNA(Pro). The misacylated Cys-tRNA(Pro) is not edited by ProRS. The chain is Proline--tRNA ligase from Hamiltonella defensa subsp. Acyrthosiphon pisum (strain 5AT).